A 632-amino-acid polypeptide reads, in one-letter code: Glycerophosphodiester phosphodiesterase domain-containing protein 4 (632 aa).

At methionine 1–glutamine 64 the chain is on the cytoplasmic side. The helical transmembrane segment at phenylalanine 65–valine 85 threads the bilayer. The Extracellular segment spans residues glutamate 86–serine 114. The helical transmembrane segment at alanine 115 to tryptophan 135 threads the bilayer. The Cytoplasmic segment spans residues glutamate 136–lysine 147. A helical membrane pass occupies residues valine 148–tryptophan 168. Over lysine 169–glutamine 180 the chain is Extracellular. Residues isoleucine 181 to leucine 201 traverse the membrane as a helical segment. The Cytoplasmic portion of the chain corresponds to serine 202 to glutamine 240. A helical membrane pass occupies residues isoleucine 241–isoleucine 261. Topologically, residues tyrosine 262 to glycine 542 are extracellular. One can recognise a GP-PDE domain in the interval proline 276–serine 533. Glutamate 308, aspartate 310, and histidine 323 together coordinate a divalent metal cation. Asparagine 343, asparagine 349, asparagine 384, and asparagine 473 each carry an N-linked (GlcNAc...) asparagine glycan. Residues phenylalanine 543–phenylalanine 563 traverse the membrane as a helical segment. At cysteine 564–leucine 632 the chain is on the cytoplasmic side. Residues glutamate 596 to leucine 632 are disordered. Basic and acidic residues predominate over residues glutamine 623–leucine 632.

It belongs to the glycerophosphoryl diester phosphodiesterase family. Detected in testis, in particular in spermatocytes.

The protein resides in the cytoplasm. It is found in the membrane. The polypeptide is Glycerophosphodiester phosphodiesterase domain-containing protein 4 (Gdpd4) (Mus musculus (Mouse)).